The chain runs to 323 residues: Beta-ketoacyl-[acyl-carrier-protein] synthase III (323 aa).

Active-site residues include cysteine 114 and histidine 250. The ACP-binding stretch occupies residues glutamine 251 to arginine 255. The active site involves asparagine 280.

It belongs to the thiolase-like superfamily. FabH family. In terms of assembly, homodimer.

It is found in the cytoplasm. It catalyses the reaction malonyl-[ACP] + acetyl-CoA + H(+) = 3-oxobutanoyl-[ACP] + CO2 + CoA. It functions in the pathway lipid metabolism; fatty acid biosynthesis. Functionally, catalyzes the condensation reaction of fatty acid synthesis by the addition to an acyl acceptor of two carbons from malonyl-ACP. Catalyzes the first condensation reaction which initiates fatty acid synthesis and may therefore play a role in governing the total rate of fatty acid production. Possesses both acetoacetyl-ACP synthase and acetyl transacylase activities. Its substrate specificity determines the biosynthesis of branched-chain and/or straight-chain of fatty acids. This chain is Beta-ketoacyl-[acyl-carrier-protein] synthase III, found in Cereibacter sphaeroides (strain ATCC 17025 / ATH 2.4.3) (Rhodobacter sphaeroides).